The primary structure comprises 439 residues: Vacuolar protein sorting-associated protein 4 (439 aa).

One can recognise an MIT domain in the interval 8-75 (LSKGIDLVQK…TRAEQLKDHL (68 aa)). The interval 76-113 (EKQAQNKSTAESSVNGSTKAKKSNGDGNGSGDDNDDAD) is disordered. The span at 80-93 (QNKSTAESSVNGST) shows a compositional bias: polar residues. 175-182 (GPPGTGKS) contributes to the ATP binding site.

This sequence belongs to the AAA ATPase family. Monomer or homodimer (in nucleotide-free form). Decamer, dodecamer or tetradecamer of two stacked respective homooligomeric rings (when bound to ATP); the dodecameric form seems to be predominant.

Its subcellular location is the endosome membrane. In terms of biological role, pre-vacuolar protein sorting protein involved in the transport of biosynthetic membrane proteins from the prevacuolar/endosomal compartment to the vacuole. Required for multivesicular body (MVB) protein sorting. Catalyzes the ATP-dependent dissociation of class E VPS proteins from endosomal membranes, such as the disassembly of the ESCRT-III complex. Required for extracellular secretion of the secreted aspartyl proteases SAP2, SAP4, SAP5, and SAP6. Its regulation of the pre-vacuolar secretory pathway is critical for virulence. The protein is Vacuolar protein sorting-associated protein 4 of Candida albicans (strain SC5314 / ATCC MYA-2876) (Yeast).